Reading from the N-terminus, the 337-residue chain is Probable cytosolic iron-sulfur protein assembly protein Ciao1 (337 aa).

WD repeat units lie at residues 12–51 (GHRG…RWVA), 58–97 (GHSR…FECN), 102–141 (GHEN…EYEC), 147–186 (THTQ…SDWS), 193–232 (SHES…NEFG), 251–290 (YHSR…SPHE), and 301–337 (AHSQ…EPEE).

Belongs to the WD repeat CIA1 family.

Functionally, essential component of the cytosolic iron-sulfur (Fe/S) protein assembly machinery. Required for the maturation of extramitochondrial Fe/S proteins. In Aedes aegypti (Yellowfever mosquito), this protein is Probable cytosolic iron-sulfur protein assembly protein Ciao1.